Consider the following 235-residue polypeptide: Pathogen-related protein (235 aa).

The sequence is that of Pathogen-related protein from Hordeum vulgare (Barley).